The chain runs to 188 residues: Chitin synthase 2 (188 aa).

Belongs to the chitin synthase family.

It is found in the cell membrane. It carries out the reaction [(1-&gt;4)-N-acetyl-beta-D-glucosaminyl](n) + UDP-N-acetyl-alpha-D-glucosamine = [(1-&gt;4)-N-acetyl-beta-D-glucosaminyl](n+1) + UDP + H(+). Its function is as follows. Polymerizes chitin, a structural polymer of the cell wall and septum, by transferring the sugar moiety of UDP-GlcNAc to the non-reducing end of the growing chitin polymer. The chain is Chitin synthase 2 (CHS2) from Exophiala jeanselmei (Dematiaceous fungus).